The sequence spans 529 residues: Ectonucleoside triphosphate diphosphohydrolase 3 (529 aa).

At 1-22 the chain is on the cytoplasmic side; that stretch reads MFTVLTRQPCEQAGLKALYRTP. A helical transmembrane segment spans residues 23–43; sequence TIIALVVLLVSIVVLVSITVI. At 44 to 485 the chain is on the extracellular side; that stretch reads QIHKQEVLPP…PLIRLPIEPP (442 aa). A glycan (N-linked (GlcNAc...) asparagine) is linked at N81. C92 and C116 are disulfide-bonded. Residue N149 is glycosylated (N-linked (GlcNAc...) asparagine). Catalysis depends on E182, which acts as the Proton acceptor. 222 to 226 contacts ATP; that stretch reads GASTQ. N-linked (GlcNAc...) asparagine glycosylation is present at N238. Intrachain disulfides connect C261/C308, C289/C334, and C347/C353. N-linked (GlcNAc...) asparagine glycosylation is found at N381, N392, N402, and N454. The cysteines at positions 399 and 422 are disulfide-linked. Residues 486–506 traverse the membrane as a helical segment; it reads VFVGTLAFFTAAALLCLAFLA. The Cytoplasmic portion of the chain corresponds to 507 to 529; that stretch reads YLCSATRRKRHSEHAFDHAVDSD.

Belongs to the GDA1/CD39 NTPase family. Ca(2+) is required as a cofactor. Mg(2+) serves as cofactor. As to expression, expressed in adult brain, pancreas, spleen and prostate. Moderate or low expression is seen in most tissues. Not expressed in liver and peripheral blood leukocytes.

Its subcellular location is the cell membrane. The catalysed reaction is a ribonucleoside 5'-triphosphate + 2 H2O = a ribonucleoside 5'-phosphate + 2 phosphate + 2 H(+). Functionally, has a threefold preference for the hydrolysis of ATP over ADP. In Homo sapiens (Human), this protein is Ectonucleoside triphosphate diphosphohydrolase 3 (ENTPD3).